Reading from the N-terminus, the 366-residue chain is Inactive protein RESTRICTED TEV MOVEMENT 2 (366 aa).

Residues Val-14–Ala-121 enclose the sHSP domain. One copy of the A-1 repeat lies at Leu-129–Arg-133. The interval Leu-129–Lys-220 is 6 X 5 AA repeats A of L-E-E-[SKR]-[ERK]. One copy of the A-2 repeat lies at Leu-135–Arg-139. The A-3 repeat unit spans residues Leu-156–Glu-160. The B-1 repeat unit spans residues Ile-163–Ala-176. The interval Ile-163–Leu-206 is 3 X 14 AA repeats B of [IMA]-[RK]-K-L-Q-E-E-A-K-A-K-E-[EK]-[LA]. The B-2 repeat unit spans residues Met-178–Ala-191. The B-3 repeat unit spans residues Ala-193–Lys-205. One copy of the A-4 repeat lies at Leu-206 to Lys-210. An A-5 repeat occupies Leu-211–Arg-215. The A-6 repeat unit spans residues Leu-216 to Lys-220. Residues Leu-322–Tyr-342 traverse the membrane as a helical segment. The disordered stretch occupies residues Cys-345 to Glu-366. Over residues Ser-346–Glu-366 the composition is skewed to low complexity.

Belongs to the small heat shock protein (HSP20) family.

The protein localises to the cell membrane. Functionally, seems to not be involved in heat resistance. Unable to mediate restriction of long-distance movement of the pathogenic tobacco etch virus (TEV) without causing a hypersensitive response or inducing systemic acquired resistance. This is Inactive protein RESTRICTED TEV MOVEMENT 2 (RTM2) from Arabidopsis thaliana (Mouse-ear cress).